The sequence spans 442 residues: Serine--tRNA ligase (442 aa).

Threonine 249–glutamate 251 contacts L-serine. Arginine 280–glutamate 282 contributes to the ATP binding site. Glutamate 303 contacts L-serine. Glutamate 367–serine 370 lines the ATP pocket. Residue serine 402 coordinates L-serine.

This sequence belongs to the class-II aminoacyl-tRNA synthetase family. Type-1 seryl-tRNA synthetase subfamily. In terms of assembly, homodimer. The tRNA molecule binds across the dimer.

It localises to the cytoplasm. It catalyses the reaction tRNA(Ser) + L-serine + ATP = L-seryl-tRNA(Ser) + AMP + diphosphate + H(+). It carries out the reaction tRNA(Sec) + L-serine + ATP = L-seryl-tRNA(Sec) + AMP + diphosphate + H(+). The protein operates within aminoacyl-tRNA biosynthesis; selenocysteinyl-tRNA(Sec) biosynthesis; L-seryl-tRNA(Sec) from L-serine and tRNA(Sec): step 1/1. In terms of biological role, catalyzes the attachment of serine to tRNA(Ser). Is also able to aminoacylate tRNA(Sec) with serine, to form the misacylated tRNA L-seryl-tRNA(Sec), which will be further converted into selenocysteinyl-tRNA(Sec). The polypeptide is Serine--tRNA ligase (Acidovorax ebreus (strain TPSY) (Diaphorobacter sp. (strain TPSY))).